A 633-amino-acid chain; its full sequence is Polypeptide N-acetylgalactosaminyltransferase 3 (633 aa).

The Cytoplasmic segment spans residues 1-19 (MAHLKRLVKLHIKRHYHRK). Residues 20 to 37 (FWKLGAVIFFFLVVLILM) traverse the membrane as a helical; Signal-anchor for type II membrane protein segment. Over 38–633 (QREVSVQYSK…LQKWIFSQND (596 aa)) the chain is Lumenal. Residues 112–145 (DRPPQDSNAPGASGKPFKITHLSPEEQKEKERGE) are disordered. Positions 134–145 (SPEEQKEKERGE) are enriched in basic and acidic residues. The catalytic subdomain A stretch occupies residues 184–293 (LPTTSVIIVF…YGWLEPLLAR (110 aa)). 2 residues coordinate Mn(2+): Asp277 and His279. An N-linked (GlcNAc...) asparagine glycan is attached at Asn297. Residues 356-418 (PIKTPTFAGG…PCSVVGHVFR (63 aa)) are catalytic subdomain B. His415 provides a ligand contact to Mn(2+). The N-linked (GlcNAc...) asparagine glycan is linked to Asn484. The region spanning 504–630 (VISGYIKSVG…TDLLQKWIFS (127 aa)) is the Ricin B-type lectin domain. Cysteines 517 and 535 form a disulfide. The UDP-N-acetyl-alpha-D-galactosamine site is built by Asp519, Glu522, His536, and Asn541. Disulfide bonds link Cys561-Cys574 and Cys605-Cys618.

The protein belongs to the glycosyltransferase 2 family. GalNAc-T subfamily. Requires Mn(2+) as cofactor. As to expression, highly expressed in the reproductive tract, principally in the testis and uterus, and to a lesser degree in the cervix with only trace levels in the ovary. Also expressed at high level in sublingual gland, stomach and colon, with more moderate amounts present in the submandibular and parotid gland as well as the kidney.

It localises to the golgi apparatus. The protein resides in the golgi stack membrane. It catalyses the reaction L-seryl-[protein] + UDP-N-acetyl-alpha-D-galactosamine = a 3-O-[N-acetyl-alpha-D-galactosaminyl]-L-seryl-[protein] + UDP + H(+). The catalysed reaction is L-threonyl-[protein] + UDP-N-acetyl-alpha-D-galactosamine = a 3-O-[N-acetyl-alpha-D-galactosaminyl]-L-threonyl-[protein] + UDP + H(+). Its pathway is protein modification; protein glycosylation. Catalyzes the initial reaction in O-linked oligosaccharide biosynthesis, the transfer of an N-acetyl-D-galactosamine residue to a serine or threonine residue on the protein receptor. Has activity toward HIV envelope glycoprotein gp120. Has activity towards EA2, MUC2 and MUC5. Probably glycosylates fibronectin in vivo. Glycosylates FGF23. The protein is Polypeptide N-acetylgalactosaminyltransferase 3 (Galnt3) of Mus musculus (Mouse).